Reading from the N-terminus, the 438-residue chain is Trigger factor (438 aa).

The 86-residue stretch at 160-245 folds into the PPIase FKBP-type domain; the sequence is DDKVTIDFVG…VKKIQQAELP (86 aa).

This sequence belongs to the FKBP-type PPIase family. Tig subfamily.

The protein localises to the cytoplasm. It catalyses the reaction [protein]-peptidylproline (omega=180) = [protein]-peptidylproline (omega=0). Its function is as follows. Involved in protein export. Acts as a chaperone by maintaining the newly synthesized protein in an open conformation. Functions as a peptidyl-prolyl cis-trans isomerase. The sequence is that of Trigger factor from Francisella tularensis subsp. tularensis (strain FSC 198).